An 89-amino-acid chain; its full sequence is Small ribosomal subunit protein uS15 (89 aa).

The protein belongs to the universal ribosomal protein uS15 family. In terms of assembly, part of the 30S ribosomal subunit. Forms a bridge to the 50S subunit in the 70S ribosome, contacting the 23S rRNA.

In terms of biological role, one of the primary rRNA binding proteins, it binds directly to 16S rRNA where it helps nucleate assembly of the platform of the 30S subunit by binding and bridging several RNA helices of the 16S rRNA. Forms an intersubunit bridge (bridge B4) with the 23S rRNA of the 50S subunit in the ribosome. The chain is Small ribosomal subunit protein uS15 from Exiguobacterium sp. (strain ATCC BAA-1283 / AT1b).